The following is a 133-amino-acid chain: ATP synthase epsilon chain (133 aa).

It belongs to the ATPase epsilon chain family. As to quaternary structure, F-type ATPases have 2 components, CF(1) - the catalytic core - and CF(0) - the membrane proton channel. CF(1) has five subunits: alpha(3), beta(3), gamma(1), delta(1), epsilon(1). CF(0) has three main subunits: a, b and c.

It localises to the cell membrane. Produces ATP from ADP in the presence of a proton gradient across the membrane. The polypeptide is ATP synthase epsilon chain (atpC) (Alkalihalophilus pseudofirmus (strain ATCC BAA-2126 / JCM 17055 / OF4) (Bacillus pseudofirmus)).